The primary structure comprises 316 residues: Ribosomal RNA small subunit methyltransferase H (316 aa).

S-adenosyl-L-methionine-binding positions include 35-37, D55, F79, D101, and Q108; that span reads GGH.

Belongs to the methyltransferase superfamily. RsmH family.

It is found in the cytoplasm. The catalysed reaction is cytidine(1402) in 16S rRNA + S-adenosyl-L-methionine = N(4)-methylcytidine(1402) in 16S rRNA + S-adenosyl-L-homocysteine + H(+). Specifically methylates the N4 position of cytidine in position 1402 (C1402) of 16S rRNA. This is Ribosomal RNA small subunit methyltransferase H from Vibrio vulnificus (strain CMCP6).